Reading from the N-terminus, the 490-residue chain is Glutamate--tRNA ligase (490 aa).

Positions 12–22 match the 'HIGH' region motif; sequence PSPTGTPHVGL. The short motif at 256–260 is the 'KMSKS' region element; that stretch reads KLSKR. Lys259 provides a ligand contact to ATP.

It belongs to the class-I aminoacyl-tRNA synthetase family. Glutamate--tRNA ligase type 1 subfamily. Monomer.

It is found in the cytoplasm. It catalyses the reaction tRNA(Glu) + L-glutamate + ATP = L-glutamyl-tRNA(Glu) + AMP + diphosphate. Functionally, catalyzes the attachment of glutamate to tRNA(Glu) in a two-step reaction: glutamate is first activated by ATP to form Glu-AMP and then transferred to the acceptor end of tRNA(Glu). This Mycobacterium sp. (strain KMS) protein is Glutamate--tRNA ligase.